The chain runs to 332 residues: Large ribosomal subunit protein uL10 (332 aa).

A disordered region spans residues 294-332; sequence QAAAAPVAVEDNTEEPEEEEEEEEDAAESAAAGLGALFG. Residues 304 to 320 show a composition bias toward acidic residues; it reads DNTEEPEEEEEEEEDAA.

This sequence belongs to the universal ribosomal protein uL10 family. In terms of assembly, part of the 50S ribosomal subunit. Forms part of the ribosomal stalk which helps the ribosome interact with GTP-bound translation factors. Forms a heptameric L10(L12)2(L12)2(L12)2 complex, where L10 forms an elongated spine to which the L12 dimers bind in a sequential fashion.

In terms of biological role, forms part of the ribosomal stalk, playing a central role in the interaction of the ribosome with GTP-bound translation factors. This chain is Large ribosomal subunit protein uL10, found in Methanosphaera stadtmanae (strain ATCC 43021 / DSM 3091 / JCM 11832 / MCB-3).